Consider the following 331-residue polypeptide: Ketol-acid reductoisomerase (NADP(+)) (331 aa).

The KARI N-terminal Rossmann domain occupies 3–183 (AQMYYDDDAD…GGTRAGALKT (181 aa)). Residues 26–29 (YGSQ), S52, and S54 each bind NADP(+). The active site involves H109. G135 provides a ligand contact to NADP(+). One can recognise a KARI C-terminal knotted domain in the interval 184-329 (TFKEETETDL…TELRSLMSWL (146 aa)). Mg(2+) contacts are provided by D192, E196, E228, and E232. Residue S253 coordinates substrate.

This sequence belongs to the ketol-acid reductoisomerase family. It depends on Mg(2+) as a cofactor.

It carries out the reaction (2R)-2,3-dihydroxy-3-methylbutanoate + NADP(+) = (2S)-2-acetolactate + NADPH + H(+). The enzyme catalyses (2R,3R)-2,3-dihydroxy-3-methylpentanoate + NADP(+) = (S)-2-ethyl-2-hydroxy-3-oxobutanoate + NADPH + H(+). The protein operates within amino-acid biosynthesis; L-isoleucine biosynthesis; L-isoleucine from 2-oxobutanoate: step 2/4. Its pathway is amino-acid biosynthesis; L-valine biosynthesis; L-valine from pyruvate: step 2/4. Functionally, involved in the biosynthesis of branched-chain amino acids (BCAA). Catalyzes an alkyl-migration followed by a ketol-acid reduction of (S)-2-acetolactate (S2AL) to yield (R)-2,3-dihydroxy-isovalerate. In the isomerase reaction, S2AL is rearranged via a Mg-dependent methyl migration to produce 3-hydroxy-3-methyl-2-ketobutyrate (HMKB). In the reductase reaction, this 2-ketoacid undergoes a metal-dependent reduction by NADPH to yield (R)-2,3-dihydroxy-isovalerate. The protein is Ketol-acid reductoisomerase (NADP(+)) of Thermobifida fusca (strain YX).